The chain runs to 102 residues: Small ribosomal subunit protein uS10 (102 aa).

It belongs to the universal ribosomal protein uS10 family. Part of the 30S ribosomal subunit.

Involved in the binding of tRNA to the ribosomes. This is Small ribosomal subunit protein uS10 from Leptospira biflexa serovar Patoc (strain Patoc 1 / Ames).